A 637-amino-acid chain; its full sequence is Transcription factor GLABRA 3 (637 aa).

The region spanning 437–486 (DETGNHAVLEKKRREKLNERFMTLRKIIPSINKIDKVSILDDTIEYLQEL) is the bHLH domain. A disordered region spans residues 497–521 (RESTDTETRGTMTMKRKKPCDAGER). Residues 541–637 (NVGEAEPADT…EALQRVAWIC (97 aa)) form a binding with MYB0/GL1 and MYB23 region.

As to quaternary structure, efficient DNA binding requires dimerization with another bHLH protein. Homodimer and heterodimer with BHLH2. Interacts directly with TTG1 and MYB0/GL1 to form a complex. Its interaction with TRY prevents MYB0/GL1 binding. Interacts with MYB75/PAP1, MYB90/PAP2, TT2, CPC, MYB23 and MYB66/WER. Interacts with MYB82. In terms of tissue distribution, mostly expressed in roots and flowers. Also present in stems and leaves, and, to a lower extent, in hypocotyls. Expressed in epidermal root hair cells (trichoblasts) and moves to root hairless cells (atrichoblasts) by a cell-to-cell movement through plasmodesmata (at protein level).

Its subcellular location is the nucleus. Functionally, transcription activator, when associated with MYB75/PAP1, MYB90/PAP2 or TT2. Involved in epidermal cell fate specification. Negatively regulates stomata formation, but, in association with TTG1 and MYB0/GL1, promotes trichome formation, branching and endoreplication. Also regulates trichome cell wall maturation. Together with MYB66/WER, promotes the formation of non-hair cells in root epidermis cells in the N position. Whereas together with CPC, promotes the formation of hair cells in root epidermis cells in the H position by inhibiting non-hair cell formation. Also seems to play a role in the activation of anthocyanin biosynthesis, probably together with MYB75/PAP1. Activates the transcription of GL2. The sequence is that of Transcription factor GLABRA 3 (GL3) from Arabidopsis thaliana (Mouse-ear cress).